Here is an 85-residue protein sequence, read N- to C-terminus: Phosphocarrier protein HPr (85 aa).

Residues 1–85 (MYSKDVEIIA…HLVALIPTLE (85 aa)) form the HPr domain. Catalysis depends on His15, which acts as the Pros-phosphohistidine intermediate.

Belongs to the HPr family.

It is found in the cytoplasm. Functionally, general (non sugar-specific) component of the phosphoenolpyruvate-dependent sugar phosphotransferase system (sugar PTS). This major carbohydrate active-transport system catalyzes the phosphorylation of incoming sugar substrates concomitantly with their translocation across the cell membrane. The phosphoryl group from phosphoenolpyruvate (PEP) is transferred to the phosphoryl carrier protein HPr by enzyme I. Phospho-HPr then transfers it to the PTS EIIA domain. The polypeptide is Phosphocarrier protein HPr (ptsH) (Haemophilus influenzae (strain ATCC 51907 / DSM 11121 / KW20 / Rd)).